Consider the following 244-residue polypeptide: Putative lipoprotein LprA (244 aa).

Positions 1-24 (MKHPPCSVVAAATAILAVVLAIGG) are cleaved as a signal peptide. Cys25 is lipidated: N-palmitoyl cysteine. Cys25 is lipidated: S-diacylglycerol cysteine.

This sequence belongs to the LppX/LprAFG lipoprotein family.

The protein resides in the cell membrane. The protein is Putative lipoprotein LprA (lprA) of Mycobacterium bovis (strain ATCC BAA-935 / AF2122/97).